The primary structure comprises 388 residues: Methylthioribose-1-phosphate isomerase (388 aa).

Catalysis depends on Asp-252, which acts as the Proton donor.

Belongs to the eIF-2B alpha/beta/delta subunits family. MtnA subfamily.

The protein localises to the cytoplasm. It is found in the nucleus. It catalyses the reaction 5-(methylsulfanyl)-alpha-D-ribose 1-phosphate = 5-(methylsulfanyl)-D-ribulose 1-phosphate. It participates in amino-acid biosynthesis; L-methionine biosynthesis via salvage pathway; L-methionine from S-methyl-5-thio-alpha-D-ribose 1-phosphate: step 1/6. Its function is as follows. Catalyzes the interconversion of methylthioribose-1-phosphate (MTR-1-P) into methylthioribulose-1-phosphate (MTRu-1-P). The protein is Methylthioribose-1-phosphate isomerase of Verticillium alfalfae (strain VaMs.102 / ATCC MYA-4576 / FGSC 10136) (Verticillium wilt of alfalfa).